The primary structure comprises 177 residues: Large ribosomal subunit protein uL6 (177 aa).

Belongs to the universal ribosomal protein uL6 family. In terms of assembly, part of the 50S ribosomal subunit.

This protein binds to the 23S rRNA, and is important in its secondary structure. It is located near the subunit interface in the base of the L7/L12 stalk, and near the tRNA binding site of the peptidyltransferase center. In Rhodospirillum centenum (strain ATCC 51521 / SW), this protein is Large ribosomal subunit protein uL6.